The following is a 338-amino-acid chain: uncharacterized protein (338 aa).

Transmembrane regions (helical) follow at residues 13 to 33 (PAYS…DFLM), 71 to 91 (GLYS…ALFF), 110 to 130 (TLCF…VYVP), 176 to 196 (YGYR…LLFY), 218 to 238 (LITG…LDVA), and 301 to 321 (FRGF…MFVF). 3 Solcar repeats span residues 13–100 (PAYS…TKRH), 108–202 (PETL…LRQV), and 216–328 (RELI…IIRL).

The protein belongs to the mitochondrial carrier (TC 2.A.29) family.

The protein resides in the mitochondrion inner membrane. In terms of biological role, mitochondrial solute carriers shuttle metabolites, nucleotides, and cofactors through the mitochondrial inner membrane. This is an uncharacterized protein from Schizosaccharomyces pombe (strain 972 / ATCC 24843) (Fission yeast).